The primary structure comprises 116 residues: MTLRAIGESSPPPRSACNSSQLIFLVVNLKVPAVGLELFLLVWESWLTYSIKESSLNVDRKDLAFKPPVFAVKCESLTLCWLRQLFLSGVSLFIEYSKSLSNKSTRPPCSPIAGYA.

The helical transmembrane segment at 22–42 threads the bilayer; the sequence is LIFLVVNLKVPAVGLELFLLV.

Its subcellular location is the membrane. This is an uncharacterized protein from Saccharomyces cerevisiae (strain ATCC 204508 / S288c) (Baker's yeast).